A 162-amino-acid chain; its full sequence is SsrA-binding protein (162 aa).

The disordered stretch occupies residues 140-162 (EDRRHDIKERETKREMDRAMRRR).

It belongs to the SmpB family.

The protein localises to the cytoplasm. Required for rescue of stalled ribosomes mediated by trans-translation. Binds to transfer-messenger RNA (tmRNA), required for stable association of tmRNA with ribosomes. tmRNA and SmpB together mimic tRNA shape, replacing the anticodon stem-loop with SmpB. tmRNA is encoded by the ssrA gene; the 2 termini fold to resemble tRNA(Ala) and it encodes a 'tag peptide', a short internal open reading frame. During trans-translation Ala-aminoacylated tmRNA acts like a tRNA, entering the A-site of stalled ribosomes, displacing the stalled mRNA. The ribosome then switches to translate the ORF on the tmRNA; the nascent peptide is terminated with the 'tag peptide' encoded by the tmRNA and targeted for degradation. The ribosome is freed to recommence translation, which seems to be the essential function of trans-translation. In Myxococcus xanthus (strain DK1622), this protein is SsrA-binding protein.